Consider the following 286-residue polypeptide: Phycobilisome 32.1 kDa linker polypeptide, phycocyanin-associated, rod (286 aa).

The 179-residue stretch at A2 to R180 folds into the PBS-linker domain. Positions D234 to A286 constitute a CpcD-like domain.

Belongs to the phycobilisome linker protein family.

It is found in the cellular thylakoid membrane. In terms of biological role, rod linker protein, associated with phycocyanin. Linker polypeptides determine the state of aggregation and the location of the disk-shaped phycobiliprotein units within the phycobilisome and modulate their spectroscopic properties in order to mediate a directed and optimal energy transfer. This is Phycobilisome 32.1 kDa linker polypeptide, phycocyanin-associated, rod (cpcC) from Mastigocladus laminosus (Fischerella sp.).